The primary structure comprises 678 residues: Glycine--tRNA ligase beta subunit (678 aa).

The protein belongs to the class-II aminoacyl-tRNA synthetase family. Tetramer of two alpha and two beta subunits.

It localises to the cytoplasm. The catalysed reaction is tRNA(Gly) + glycine + ATP = glycyl-tRNA(Gly) + AMP + diphosphate. The sequence is that of Glycine--tRNA ligase beta subunit from Streptococcus pneumoniae (strain ATCC 700669 / Spain 23F-1).